An 876-amino-acid chain; its full sequence is Alanine--tRNA ligase (876 aa).

Zn(2+) is bound by residues histidine 565, histidine 569, cysteine 667, and histidine 671.

It belongs to the class-II aminoacyl-tRNA synthetase family. The cofactor is Zn(2+).

The protein localises to the cytoplasm. It carries out the reaction tRNA(Ala) + L-alanine + ATP = L-alanyl-tRNA(Ala) + AMP + diphosphate. Catalyzes the attachment of alanine to tRNA(Ala) in a two-step reaction: alanine is first activated by ATP to form Ala-AMP and then transferred to the acceptor end of tRNA(Ala). Also edits incorrectly charged Ser-tRNA(Ala) and Gly-tRNA(Ala) via its editing domain. The chain is Alanine--tRNA ligase from Desulfosudis oleivorans (strain DSM 6200 / JCM 39069 / Hxd3) (Desulfococcus oleovorans).